Here is a 203-residue protein sequence, read N- to C-terminus: Protein GrpE (203 aa).

This sequence belongs to the GrpE family. In terms of assembly, homodimer.

It localises to the cytoplasm. In terms of biological role, participates actively in the response to hyperosmotic and heat shock by preventing the aggregation of stress-denatured proteins, in association with DnaK and GrpE. It is the nucleotide exchange factor for DnaK and may function as a thermosensor. Unfolded proteins bind initially to DnaJ; upon interaction with the DnaJ-bound protein, DnaK hydrolyzes its bound ATP, resulting in the formation of a stable complex. GrpE releases ADP from DnaK; ATP binding to DnaK triggers the release of the substrate protein, thus completing the reaction cycle. Several rounds of ATP-dependent interactions between DnaJ, DnaK and GrpE are required for fully efficient folding. In Pseudoalteromonas translucida (strain TAC 125), this protein is Protein GrpE.